A 635-amino-acid polypeptide reads, in one-letter code: Biosynthetic arginine decarboxylase (635 aa).

Residue Lys100 is modified to N6-(pyridoxal phosphate)lysine. A substrate-binding site is contributed by 282 to 292 (IDIGGGLGVDY).

Belongs to the Orn/Lys/Arg decarboxylase class-II family. SpeA subfamily. The cofactor is Mg(2+). Pyridoxal 5'-phosphate serves as cofactor.

The enzyme catalyses L-arginine + H(+) = agmatine + CO2. It functions in the pathway amine and polyamine biosynthesis; agmatine biosynthesis; agmatine from L-arginine: step 1/1. Its function is as follows. Catalyzes the biosynthesis of agmatine from arginine. This chain is Biosynthetic arginine decarboxylase, found in Pelobacter propionicus (strain DSM 2379 / NBRC 103807 / OttBd1).